The sequence spans 228 residues: Endonuclease V (228 aa).

Positions 43 and 109 each coordinate Mg(2+).

Belongs to the endonuclease V family. The cofactor is Mg(2+).

Its subcellular location is the cytoplasm. The catalysed reaction is Endonucleolytic cleavage at apurinic or apyrimidinic sites to products with a 5'-phosphate.. DNA repair enzyme involved in the repair of deaminated bases. Selectively cleaves double-stranded DNA at the second phosphodiester bond 3' to a deoxyinosine leaving behind the intact lesion on the nicked DNA. This chain is Endonuclease V, found in Dictyoglomus turgidum (strain DSM 6724 / Z-1310).